A 380-amino-acid polypeptide reads, in one-letter code: MVHILSSALSLLRLGAAVSAAPAPAPTAAPNVADALAAVEKRAGSCTFSDPAVPLPAIKSKASCATIVISAVAVPSGTTLDLTGLKSGTHVVFEGTTTFGYEEWSGPLVSVSGTDITVTGASGSVLDGNGAKYWDGKGTNGGKTKPKFFYAHSLKGKSSINNVKILNSPVQVFSINSASGLTLSGITIDNSAGNSLGHNTDAFDVGSSTDITISGANVQNQDDCLAINSGTGITFTGGTCSGGHGLSIGSVGGRSDNVVSDVIIESSTVKNSANGVRIKTVLGATGSVSGVTYKDITLSGITSYGVVIEQDYENGSPTGKPTSGVPITGVTLSNVHGTVSSSATNVYVLCAKCSGWTWDVNVTGGKTSTKCAGLPSGVKC.

The first 17 residues, 1–17 (MVHILSSALSLLRLGAA), serve as a signal peptide directing secretion. The propeptide occupies 18 to 42 (VSAAPAPAPTAAPNVADALAAVEKR). Cysteine 46 and cysteine 64 form a disulfide bridge. 6 PbH1 repeats span residues 178 to 207 (ASGLTLSGITIDNSAGNSLGHNTDAFDVGS), 208 to 229 (STDITISGANVQNQDDCLAINS), 230 to 250 (GTGITFTGGTCSGGHGLSIGS), 259 to 280 (VSDVIIESSTVKNSANGVRIKT), 288 to 310 (VSGVTYKDITLSGITSYGVVIEQ), and 322 to 343 (TSGVPITGVTLSNVHGTVSSSA). The active-site Proton donor is the aspartate 222. An intrachain disulfide couples cysteine 224 to cysteine 240. Histidine 244 is a catalytic residue. Cysteine 350 and cysteine 353 form a disulfide bridge. The N-linked (GlcNAc...) asparagine glycan is linked to asparagine 361. A disulfide bridge connects residues cysteine 371 and cysteine 380.

This sequence belongs to the glycosyl hydrolase 28 family.

It localises to the secreted. The catalysed reaction is (1,4-alpha-D-galacturonosyl)n+m + H2O = (1,4-alpha-D-galacturonosyl)n + (1,4-alpha-D-galacturonosyl)m.. In Sclerotinia sclerotiorum (White mold), this protein is Endo-polygalacturonase (PG1).